Here is a 200-residue protein sequence, read N- to C-terminus: MKFLLFCCLFGTFLATGMCIDCEHCVVWGQNCTGWKETCGENEDTCVTYQTEVIRPPLSITFTAKTCGTSDTCHLDYVEANPHNELTLRAKRACCTGDECQTLPPPVLEPQVNRPNGLQCPGCIGLTSTECNEYLVSCQGSENQCLTIILKKPDFSLSEMSFKGCASENLCLLFEKKFWRFLEASEVDVKCTPAVPQTSQ.

A signal peptide spans 1 to 19; that stretch reads MKFLLFCCLFGTFLATGMC. 8 cysteine pairs are disulfide-bonded: Cys22-Cys46, Cys25-Cys32, Cys39-Cys67, Cys73-Cys94, Cys95-Cys100, Cys120-Cys145, Cys138-Cys165, and Cys171-Cys191.

This sequence belongs to the CNF-like-inhibitor family. As to quaternary structure, heteromer composed of subunit A and subunit B.

Its subcellular location is the secreted. Its function is as follows. Inhibits the enzymatic activity of the phospholipase A2 (PLA2). In Elaphe climacophora (Japanese rat snake), this protein is Phospholipase A2 inhibitor gamma subunit B.